The following is a 570-amino-acid chain: Sulfite reductase [NADPH] hemoprotein beta-component (570 aa).

[4Fe-4S] cluster is bound by residues Cys-434, Cys-440, Cys-479, and Cys-483. Cys-483 contributes to the siroheme binding site.

Belongs to the nitrite and sulfite reductase 4Fe-4S domain family. In terms of assembly, alpha(8)-beta(8). The alpha component is a flavoprotein, the beta component is a hemoprotein. Siroheme serves as cofactor. The cofactor is [4Fe-4S] cluster.

The catalysed reaction is hydrogen sulfide + 3 NADP(+) + 3 H2O = sulfite + 3 NADPH + 4 H(+). It participates in sulfur metabolism; hydrogen sulfide biosynthesis; hydrogen sulfide from sulfite (NADPH route): step 1/1. Functionally, component of the sulfite reductase complex that catalyzes the 6-electron reduction of sulfite to sulfide. This is one of several activities required for the biosynthesis of L-cysteine from sulfate. The sequence is that of Sulfite reductase [NADPH] hemoprotein beta-component from Salmonella gallinarum (strain 287/91 / NCTC 13346).